Consider the following 366-residue polypeptide: Transmembrane protein 26 (366 aa).

Helical transmembrane passes span 4 to 24 (LVLLKALVTRLLFLLHSLVAV), 36 to 56 (YWLLALLNLLLVLETVLTLKF), and 64 to 84 (WLSPAIFVYLVNIMPSLWLLE). N-linked (GlcNAc...) asparagine glycosylation is present at N110. 5 consecutive transmembrane segments (helical) span residues 138–158 (MVCEPVWTLGLHQTLLLILII), 176–196 (ELLLMFVGTAADILEFTTETL), 208–228 (VSGILVVWTWSMLQFPLDLAV), 258–278 (IGLSFFIQDGPFLVVRLVLMI), and 282–302 (VINHMLVFFAVKNSLVMALHF). The span at 319–329 (HPESPKPEHSG) shows a compositional bias: basic and acidic residues. Positions 319–366 (HPESPKPEHSGPDQPSESGPSEWEDASPEALPLRTSPVTSEESYPTTP) are disordered. A compositionally biased stretch (polar residues) spans 354–366 (SPVTSEESYPTTP).

It is found in the membrane. In Mus musculus (Mouse), this protein is Transmembrane protein 26 (Tmem26).